Consider the following 463-residue polypeptide: Endoglucanase (463 aa).

A signal peptide spans 1-27 (MVEKRKIFTVLCACGIGFTSYTSCISA). The propeptide occupies 28–55 (AAIDNDTLINNGHKINSSIITNSSQVSA). Catalysis depends on Glu-130, which acts as the Proton donor. The active-site Nucleophile is Asp-191.

Belongs to the glycosyl hydrolase 8 (cellulase D) family. The N- and the C-terminus may be subjected to proteolysis.

The catalysed reaction is Endohydrolysis of (1-&gt;4)-beta-D-glucosidic linkages in cellulose, lichenin and cereal beta-D-glucans.. In Bacillus sp. (strain KSM-330), this protein is Endoglucanase.